We begin with the raw amino-acid sequence, 929 residues long: ATP-dependent DNA helicase PIF1 (929 aa).

Residues M1–F52 constitute a mitochondrion transit peptide. Positions G55–T89 are disordered. Residues T56–R66 are compositionally biased toward basic and acidic residues. The span at A74 to T89 shows a compositional bias: polar residues. G302–T309 contributes to the ATP binding site. The DNA-binding element occupies H776 to F796. The interval H902–E929 is disordered. Residues Q916–E929 show a composition bias toward polar residues.

The protein belongs to the helicase family. PIF1 subfamily. Monomer. The cofactor is Mg(2+).

It is found in the mitochondrion. It carries out the reaction Couples ATP hydrolysis with the unwinding of duplex DNA at the replication fork by translocating in the 5'-3' direction. This creates two antiparallel DNA single strands (ssDNA). The leading ssDNA polymer is the template for DNA polymerase III holoenzyme which synthesizes a continuous strand.. The catalysed reaction is ATP + H2O = ADP + phosphate + H(+). In terms of biological role, DNA-dependent ATPase and probable 5'-3' DNA helicase required for the maintenance of mitochondrial (kinetoplast) genome stability. Essential for replication of kinetoplast minicircles. Involved in the segregation of minicircle progeny. The sequence is that of ATP-dependent DNA helicase PIF1 from Trypanosoma brucei brucei (strain 927/4 GUTat10.1).